A 538-amino-acid polypeptide reads, in one-letter code: Probable bifunctional riboflavin biosynthesis protein RIBA 1, chloroplastic (538 aa).

Over residues 1–16 (MSRLSSIYSQHRTSGL) the composition is skewed to polar residues. Positions 1–29 (MSRLSSIYSQHRTSGLRSDRSIMPNSTSN) are disordered. The N-terminal 73 residues, 1-73 (MSRLSSIYSQ…NGQASPSKVV (73 aa)), are a transit peptide targeting the chloroplast. The tract at residues 46–311 (RNFHISHAVG…IADLIRYRRK (266 aa)) is DHBP synthase. Residues 134-135 (RE), Asp-139, 249-253 (RAGHT), and Glu-273 contribute to the D-ribulose 5-phosphate site. Mg(2+) is bound at residue Glu-135. Residue His-252 participates in Mg(2+) binding. The tract at residues 312 to 530 (RDRLVERVCV…DGGIKKEQDQ (219 aa)) is GTP cyclohydrolase II. 362-366 (RVHSE) provides a ligand contact to GTP. Positions 367, 378, and 380 each coordinate Zn(2+). GTP is bound by residues Gln-383, 406 to 408 (EGR), and Thr-428. The active-site Proton acceptor; for GTP cyclohydrolase activity is Asp-440. Arg-442 (nucleophile; for GTP cyclohydrolase activity) is an active-site residue. 2 residues coordinate GTP: Thr-463 and Lys-468. The disordered stretch occupies residues 506–538 (HVYGTRPSGNTSTLADGGIKKEQDQIDSASEQE).

This sequence in the N-terminal section; belongs to the DHBP synthase family. In the C-terminal section; belongs to the GTP cyclohydrolase II family. Requires Mg(2+) as cofactor. The cofactor is Mn(2+). Zn(2+) serves as cofactor.

It is found in the plastid. The protein localises to the chloroplast. It carries out the reaction D-ribulose 5-phosphate = (2S)-2-hydroxy-3-oxobutyl phosphate + formate + H(+). The enzyme catalyses GTP + 4 H2O = 2,5-diamino-6-hydroxy-4-(5-phosphoribosylamino)-pyrimidine + formate + 2 phosphate + 3 H(+). It participates in cofactor biosynthesis; riboflavin biosynthesis; 2-hydroxy-3-oxobutyl phosphate from D-ribulose 5-phosphate: step 1/1. It functions in the pathway cofactor biosynthesis; riboflavin biosynthesis; 5-amino-6-(D-ribitylamino)uracil from GTP: step 1/4. Its function is as follows. Involved in riboflavin biosynthesis. Catalyzes both the conversion of D-ribulose 5-phosphate to formate and 3,4-dihydroxy-2-butanone 4-phosphate and the conversion of GTP to 2,5-diamino-6-ribosylamino-4(3H)-pyrimidinone 5'-phosphate (DARP), formate and pyrophosphate. In Oryza sativa subsp. japonica (Rice), this protein is Probable bifunctional riboflavin biosynthesis protein RIBA 1, chloroplastic (RIBA1).